A 117-amino-acid polypeptide reads, in one-letter code: ATP-dependent Clp protease adapter protein ClpS 1 (117 aa).

The disordered stretch occupies residues 1-33 (MIAMPVRMQQGSEGDGGGPSRGTSVITRTKPKT).

It belongs to the ClpS family. Binds to the N-terminal domain of the chaperone ClpA.

In terms of biological role, involved in the modulation of the specificity of the ClpAP-mediated ATP-dependent protein degradation. In Rhizobium meliloti (strain 1021) (Ensifer meliloti), this protein is ATP-dependent Clp protease adapter protein ClpS 1.